A 438-amino-acid polypeptide reads, in one-letter code: uncharacterized protein (438 aa).

Residues 1-32 form the signal peptide; it reads MARPLLGKTSSVRRRLESLSACSIFFFLRKFC.

This is an uncharacterized protein from Frog virus 3 (isolate Goorha) (FV-3).